Here is an 871-residue protein sequence, read N- to C-terminus: Alanine--tRNA ligase (871 aa).

Residues H590, H594, C694, and H698 each coordinate Zn(2+).

The protein belongs to the class-II aminoacyl-tRNA synthetase family. Zn(2+) is required as a cofactor.

It is found in the cytoplasm. The enzyme catalyses tRNA(Ala) + L-alanine + ATP = L-alanyl-tRNA(Ala) + AMP + diphosphate. Its function is as follows. Catalyzes the attachment of alanine to tRNA(Ala) in a two-step reaction: alanine is first activated by ATP to form Ala-AMP and then transferred to the acceptor end of tRNA(Ala). Also edits incorrectly charged Ser-tRNA(Ala) and Gly-tRNA(Ala) via its editing domain. The chain is Alanine--tRNA ligase from Thermoplasma acidophilum (strain ATCC 25905 / DSM 1728 / JCM 9062 / NBRC 15155 / AMRC-C165).